Here is a 143-residue protein sequence, read N- to C-terminus: WW domain-containing protein C660.05 (143 aa).

Residues 9 to 44 (GLPAGWVAQWDPTYQAYFYINETFEGAQPQWEPPIP) form the WW domain. Residues 115–143 (HHGPLHGPHGGFGGRGGGRMGGRGGRGRR) are disordered.

The chain is WW domain-containing protein C660.05 from Schizosaccharomyces pombe (strain 972 / ATCC 24843) (Fission yeast).